A 547-amino-acid chain; its full sequence is TBCC domain-containing protein 1 (547 aa).

The C-CAP/cofactor C-like domain occupies 304-435 (PHTHRMVVMS…LEDHMAHTGL (132 aa)).

The protein belongs to the TBCC family.

The protein resides in the cytoplasm. It is found in the cytoskeleton. It localises to the microtubule organizing center. Its subcellular location is the centrosome. The protein localises to the spindle pole. In terms of biological role, may play a role in the regulation of centrosome and Golgi apparatus positioning. This Xenopus tropicalis (Western clawed frog) protein is TBCC domain-containing protein 1 (tbccd1).